The following is a 213-amino-acid chain: Protein brother (213 aa).

Residues 189–213 (HTPQTPPEDHHHRGGPGLPRGPMGW) form a disordered region. Positions 203–213 (GPGLPRGPMGW) are enriched in gly residues.

The protein belongs to the CBF-beta family.

It is found in the nucleus. Functionally, regulates the DNA-binding properties of Runt. This chain is Protein brother (Bro), found in Drosophila melanogaster (Fruit fly).